Reading from the N-terminus, the 826-residue chain is Protein lozenge (826 aa).

3 disordered regions span residues 1-45 (MHLH…ASQT), 87-171 (PVSV…WSSS), and 214-263 (ASVG…NNNN). The segment covering 12–24 (PPSPSPNPTPTPS) has biased composition (pro residues). Over residues 106 to 141 (SHHHHHLHHHYSPYHHAHPYHPPHPHAPHHHHHHHP) the composition is skewed to basic residues. Positions 142 to 153 (PYPYPPAGPHPP) are enriched in pro residues. The span at 156–171 (VTSSSTSPTGNGWSSS) shows a compositional bias: polar residues. Positions 275-403 (LVQKRQQEHP…TVDGPREPRS (129 aa)) constitute a Runt domain. Low complexity predominate over residues 774-798 (QQQQQQQQQQQQVHHPQQQQVESAG). Positions 774–826 (QQQQQQQQQQQQVHHPQQQQVESAGEVGGSGAGGVESAREEDVGDLSQVWRPY) are disordered.

In terms of tissue distribution, expressed in the pupal eye during programmed cell death.

The protein localises to the nucleus. In terms of biological role, involved in prepatterning photoreceptor precursors in the developing eye; in the larval eye disk it defines a subset of cells as an equipotential group that is competent to respond to the sevenless developmental signal and another subset that confer proper photoreceptor identity by positively regulating the homeo box gene Bar. Involved in the aop/pnt dynamic in a Ras-dependent manner to regulate pros expression. Promotes apoptosis in the pupal eye by directly activating aos and klu. Also modulates hid- and rpr-mediated cell death. Regulates amos function in olfactory sensilla development. The protein is Protein lozenge (lz) of Drosophila melanogaster (Fruit fly).